Consider the following 159-residue polypeptide: Small ribosomal subunit protein uS7 (159 aa).

The protein belongs to the universal ribosomal protein uS7 family. Part of the 30S ribosomal subunit. Contacts proteins S9 and S11.

Its function is as follows. One of the primary rRNA binding proteins, it binds directly to 16S rRNA where it nucleates assembly of the head domain of the 30S subunit. Is located at the subunit interface close to the decoding center, probably blocks exit of the E-site tRNA. This Endomicrobium trichonymphae protein is Small ribosomal subunit protein uS7.